The sequence spans 93 residues: Integration host factor subunit beta (93 aa).

This sequence belongs to the bacterial histone-like protein family. As to quaternary structure, heterodimer of an alpha and a beta chain.

Functionally, this protein is one of the two subunits of integration host factor, a specific DNA-binding protein that functions in genetic recombination as well as in transcriptional and translational control. This chain is Integration host factor subunit beta (ihfB), found in Cereibacter sphaeroides (strain ATCC 17023 / DSM 158 / JCM 6121 / CCUG 31486 / LMG 2827 / NBRC 12203 / NCIMB 8253 / ATH 2.4.1.) (Rhodobacter sphaeroides).